Here is a 462-residue protein sequence, read N- to C-terminus: Hyaluronidase-1 (462 aa).

An N-terminal signal peptide occupies residues 1 to 52 (MLGLTQHAQKVWRMKPFSPEVSPGSSPATAGHLLRISTLFLTLLELAQVCRG). 2 disulfide bridges follow: C71-C361 and C235-C249. N98 and N127 each carry an N-linked (GlcNAc...) asparagine glycan. Residue E159 is the Proton donor of the active site. Residues N244, N265, and N378 are each glycosylated (N-linked (GlcNAc...) asparagine). Disulfide bonds link C386–C397, C391–C446, and C448–C457. Residues 446–457 (CRCYRGWRGKWC) enclose the EGF-like domain.

Belongs to the glycosyl hydrolase 56 family. As to expression, highly expressed in liver, kidney, lung and skin.

The protein resides in the secreted. Its subcellular location is the lysosome. The catalysed reaction is Random hydrolysis of (1-&gt;4)-linkages between N-acetyl-beta-D-glucosamine and D-glucuronate residues in hyaluronate.. Functionally, may have a role in promoting tumor progression. May block the TGFB1-enhanced cell growth. In Mus musculus (Mouse), this protein is Hyaluronidase-1 (Hyal1).